The following is a 75-amino-acid chain: RNA-binding protein KhpA (75 aa).

The region spanning 29 to 75 (KKVYEIVVNEEDVGQVIGKDGRTIKSLKILLSALMGDSKEITIKVVR) is the KH domain.

It belongs to the KhpA RNA-binding protein family. In terms of assembly, forms a complex with KhpB.

Its subcellular location is the cytoplasm. In terms of biological role, a probable RNA chaperone. Forms a complex with KhpB which binds to cellular RNA and controls its expression. Plays a role in peptidoglycan (PG) homeostasis and cell length regulation. In Thermotoga maritima (strain ATCC 43589 / DSM 3109 / JCM 10099 / NBRC 100826 / MSB8), this protein is RNA-binding protein KhpA.